We begin with the raw amino-acid sequence, 249 residues long: 2,3-bisphosphoglycerate-dependent phosphoglycerate mutase (249 aa).

Substrate-binding positions include 9-16, 22-23, Arg-61, 88-91, Lys-99, 115-116, and 184-185; these read RHGQSQWN, TG, ERHY, RR, and GN. His-10 acts as the Tele-phosphohistidine intermediate in catalysis. Glu-88 functions as the Proton donor/acceptor in the catalytic mechanism.

This sequence belongs to the phosphoglycerate mutase family. BPG-dependent PGAM subfamily. Homodimer.

It carries out the reaction (2R)-2-phosphoglycerate = (2R)-3-phosphoglycerate. The protein operates within carbohydrate degradation; glycolysis; pyruvate from D-glyceraldehyde 3-phosphate: step 3/5. Functionally, catalyzes the interconversion of 2-phosphoglycerate and 3-phosphoglycerate. The polypeptide is 2,3-bisphosphoglycerate-dependent phosphoglycerate mutase (Xylella fastidiosa (strain M12)).